The primary structure comprises 232 residues: 7-cyano-7-deazaguanine synthase (232 aa).

8–18 (FSGGQDSTTCL) is an ATP binding site. 4 residues coordinate Zn(2+): C187, C196, C199, and C202.

The protein belongs to the QueC family. The cofactor is Zn(2+).

The enzyme catalyses 7-carboxy-7-deazaguanine + NH4(+) + ATP = 7-cyano-7-deazaguanine + ADP + phosphate + H2O + H(+). Its pathway is purine metabolism; 7-cyano-7-deazaguanine biosynthesis. In terms of biological role, catalyzes the ATP-dependent conversion of 7-carboxy-7-deazaguanine (CDG) to 7-cyano-7-deazaguanine (preQ(0)). The chain is 7-cyano-7-deazaguanine synthase from Vibrio parahaemolyticus serotype O3:K6 (strain RIMD 2210633).